Reading from the N-terminus, the 318-residue chain is Malonyl-S-ACP:biotin-protein carboxyltransferase MADC (318 aa).

Residues 2–257 form the CoA carboxyltransferase N-terminal domain; it reads AKWTELQDKS…VLQKPMEEIE (256 aa).

Its subcellular location is the cytoplasm. The catalysed reaction is N(6)-biotinyl-L-lysyl-[protein] + malonyl-[ACP] = N(6)-carboxybiotinyl-L-lysyl-[protein] + acetyl-[ACP]. Functionally, gamma subunit of the biotin-dependent malonate decarboxylase multienzyme complex (EC 7.2.4.4). The two subunits MADC and MADD are required for the transfer of the malonate carboxy group from the acyl-carrier protein (ACP) to the prosthetic group of the biotin carrier MADF. Required for the regeneration of ACP. This Malonomonas rubra protein is Malonyl-S-ACP:biotin-protein carboxyltransferase MADC (madC).